We begin with the raw amino-acid sequence, 570 residues long: Probable D-xylulose kinase A (570 aa).

The substrate site is built by His95, Arg166, Asp282, and Asn283. ATP-binding positions include Trp364, 469-470 (GG), and Asn473.

It belongs to the FGGY kinase family.

Its subcellular location is the cytoplasm. The catalysed reaction is D-xylulose + ATP = D-xylulose 5-phosphate + ADP + H(+). Highly specific D-xylulose kinase which participates in the catabolism of xylose. Xylose is a major component of hemicelluloses such as xylan. Most fungi utilize D-xylose via three enzymatic reactions, xylose reductase (XR), xylitol dehydrogenase (XDH), and xylulokinase, to form xylulose 5-phosphate, which enters pentose phosphate pathway. The polypeptide is Probable D-xylulose kinase A (xkiA) (Aspergillus niger (strain ATCC MYA-4892 / CBS 513.88 / FGSC A1513)).